Consider the following 354-residue polypeptide: Ferredoxin--NADP reductase (354 aa).

Residues Asp-42, Gln-50, Tyr-55, Ile-95, Phe-130, Asp-299, and Thr-339 each coordinate FAD.

Belongs to the ferredoxin--NADP reductase type 2 family. Homodimer. Requires FAD as cofactor.

The catalysed reaction is 2 reduced [2Fe-2S]-[ferredoxin] + NADP(+) + H(+) = 2 oxidized [2Fe-2S]-[ferredoxin] + NADPH. This is Ferredoxin--NADP reductase from Acidovorax sp. (strain JS42).